A 339-amino-acid chain; its full sequence is 5-dehydro-2-deoxygluconokinase (339 aa).

The protein belongs to the carbohydrate kinase PfkB family.

It carries out the reaction 5-dehydro-2-deoxy-D-gluconate + ATP = 6-phospho-5-dehydro-2-deoxy-D-gluconate + ADP + H(+). It functions in the pathway polyol metabolism; myo-inositol degradation into acetyl-CoA; acetyl-CoA from myo-inositol: step 5/7. In terms of biological role, catalyzes the phosphorylation of 5-dehydro-2-deoxy-D-gluconate (2-deoxy-5-keto-D-gluconate or DKG) to 6-phospho-5-dehydro-2-deoxy-D-gluconate (DKGP). The polypeptide is 5-dehydro-2-deoxygluconokinase (Clostridium beijerinckii (strain ATCC 51743 / NCIMB 8052) (Clostridium acetobutylicum)).